Reading from the N-terminus, the 954-residue chain is Glycine dehydrogenase (decarboxylating) (954 aa).

Lys-704 is modified (N6-(pyridoxal phosphate)lysine).

This sequence belongs to the GcvP family. In terms of assembly, the glycine cleavage system is composed of four proteins: P, T, L and H. Requires pyridoxal 5'-phosphate as cofactor.

It carries out the reaction N(6)-[(R)-lipoyl]-L-lysyl-[glycine-cleavage complex H protein] + glycine + H(+) = N(6)-[(R)-S(8)-aminomethyldihydrolipoyl]-L-lysyl-[glycine-cleavage complex H protein] + CO2. Functionally, the glycine cleavage system catalyzes the degradation of glycine. The P protein binds the alpha-amino group of glycine through its pyridoxal phosphate cofactor; CO(2) is released and the remaining methylamine moiety is then transferred to the lipoamide cofactor of the H protein. In Vibrio vulnificus (strain YJ016), this protein is Glycine dehydrogenase (decarboxylating).